Reading from the N-terminus, the 256-residue chain is Cell division protein ZipA (256 aa).

Topologically, residues 1-6 are periplasmic; the sequence is MQYGRQ. A helical transmembrane segment spans residues 7–27; that stretch reads ILICIGILTVIILLLYGLLNS. The Cytoplasmic segment spans residues 28–256; sequence YWDRTVTFCK…RHVLSANKST (229 aa).

Belongs to the ZipA family. Interacts with FtsZ via their C-terminal domains.

The protein localises to the cell inner membrane. Its function is as follows. Essential cell division protein that stabilizes the FtsZ protofilaments by cross-linking them and that serves as a cytoplasmic membrane anchor for the Z ring. Also required for the recruitment to the septal ring of downstream cell division proteins. This Baumannia cicadellinicola subsp. Homalodisca coagulata protein is Cell division protein ZipA.